Consider the following 274-residue polypeptide: 3-methyl-2-oxobutanoate hydroxymethyltransferase (274 aa).

Mg(2+) is bound by residues aspartate 46 and aspartate 85. 3-methyl-2-oxobutanoate-binding positions include 46–47 (DS), aspartate 85, and lysine 114. Glutamate 116 provides a ligand contact to Mg(2+). The active-site Proton acceptor is glutamate 183.

It belongs to the PanB family. In terms of assembly, homodecamer; pentamer of dimers. Requires Mg(2+) as cofactor.

The protein resides in the cytoplasm. It catalyses the reaction 3-methyl-2-oxobutanoate + (6R)-5,10-methylene-5,6,7,8-tetrahydrofolate + H2O = 2-dehydropantoate + (6S)-5,6,7,8-tetrahydrofolate. It participates in cofactor biosynthesis; coenzyme A biosynthesis. In terms of biological role, catalyzes the reversible reaction in which hydroxymethyl group from 5,10-methylenetetrahydrofolate is transferred onto alpha-ketoisovalerate to form ketopantoate. This Aeropyrum pernix (strain ATCC 700893 / DSM 11879 / JCM 9820 / NBRC 100138 / K1) protein is 3-methyl-2-oxobutanoate hydroxymethyltransferase.